A 1090-amino-acid polypeptide reads, in one-letter code: MTAASTSKWGLITNVVNSIVGVSVLTMPFCFKQCGIVLGALLLVFCSWMTHQSCMFLVKSASLSKRRTYAGLAFHAYGKAGKMLVETSMIGLMLGSCITFYVVIGDLGSNFFAPLLGLQVTRTVRVFLLFAVSLFIVLPLSLQRNMMASIQSFSAMALLFYTVFMFVIVLSSLKHGLFSGQWLRQVSYIRWEGVFRCVPIFGMSFACQSQVLPTYDSLDEPSVKTMSSIFASSLNVVTAFYVMVGFFGYVSFTDATTGNVLIHFPSNPVTEMIRVGFVMSVAVGFPMMILPCRQALNTLLFEQQQKDGTFAAGGYMPPLRFKVLTLSVVFGTMVGGVMIPNVETILGFTGATMGSLICFICPALIYKKAHKNAPSAQVVLWVGLGILVVSTLTTLSVTEEAPLDLTQEARSGHRGDAEGAMKVEAARLSVQDPVVVVAEDSQEKLKPAEDKEVLEQAQIKGPVDVPGGEAPKEKQEAAQLDRPGQGIAVPMGEAHRHEPPIPHDKVVVDEGQDQEGPEEKKPPPRLPDEGDPAGRGQGAPPLPESEKEKQEPERGGEGKRPGQVLAVGETEHPQKVPEANGQPPVQPRKEDSRPGNRDPQPAAQARDSVELKALAADDGREPAQKAGGALWKPVESAAESDAGGKAGLPVQRPEAAEQREKKEAEQQGGDQAGSKLEAEIKKLVAEAGRAEMLDHAVLLQVIQEQQVQQKRLLDQQEKLLAVIEEQHKEIRQQRQEGEEDKPKPADVQPEPGVAVLRGQEEEAEHAGETLGDDPSQPLQPVLGAPRGRPAPSQDMGQHLPGEVKVLPGRDLADLPAGGSETEPQGAPIDLREDPKAAIKAAGAGKELVPGDLEAVHKAAPPEVPKSPEKQVAKAVAGQRQDVFGEGSEERKETGKEAMAPGADTQKEAVQPLVGAEAKDTKSRQSGPTKAPVQTQAKFHPEPQAIFDTGQGSHPEVRSEAPRAVHIPPEEQHKGKGGAAIQEAKQRPDPNSGPKLAVPAGQKPENAKPNRDLKVQAGSDLRRRRRDLASHPEQELAPKDGVIISFNSLPNVQVNDLRSALDTQLRQAAGAALQVVHSRQIKQLSGDLEEA.

10 helical membrane-spanning segments follow: residues 9-31 (WGLI…PFCF), 36-58 (IVLG…MFLV), 84-104 (LVET…YVVI), 123-143 (TVRV…LSLQ), 153-173 (FSAM…LSSL), 229-249 (IFAS…FFGY), 272-292 (MIRV…ILPC), 323-343 (VLTL…PNVE), 345-365 (ILGF…PALI), and 378-398 (VVLW…LSVT). Ser-441 carries the phosphoserine modification. 6 stretches are compositionally biased toward basic and acidic residues: residues 441 to 454 (SQEK…KEVL), 493 to 508 (EAHR…KVVV), 517 to 528 (PEEKKPPPRLPD), 544 to 560 (ESEK…EGKR), 587 to 596 (PRKEDSRPGN), and 607 to 623 (DSVE…REPA). Disordered stretches follow at residues 441–675 (SQEK…AGSK), 729–831 (EIRQ…IDLR), and 857–1037 (KAAP…ELAP). 2 positions are modified to phosphoserine: Ser-608 and Ser-636. Composition is skewed to basic and acidic residues over residues 654–665 (EAAEQREKKEAE), 729–744 (EIRQ…KPKP), and 758–767 (GQEEEAEHAG). At Thr-769 the chain carries Phosphothreonine. Ser-887 carries the phosphoserine modification. Positions 923 to 936 (RQSGPTKAPVQTQA) are enriched in polar residues. Composition is skewed to basic and acidic residues over residues 954–973 (PEVR…EQHK), 1004–1013 (ENAKPNRDLK), and 1026–1037 (DLASHPEQELAP).

It belongs to the amino acid/polyamine transporter 2 family. Expressed in neurons, astrocytes and epithelial cells scattered throughout the central nervous system structures including striatum, ependyma, cerebral cortex, hippocampus, hypothalamus, thalamus, pons, and cerebellum (at protein level). Highly expressed in paraventricular hypothalamic nucleus, suprachiasmatic nucleus, anterior hypothalamic area central part, in lateral ventricule and in dorsal 3rd ventricule (at protein level). Expressed in choroid plexus epithelial cells (at protein level).

The protein localises to the membrane. It catalyses the reaction L-glutamate(out) = L-glutamate(in). The enzyme catalyses L-glutamine(out) = L-glutamine(in). The catalysed reaction is L-alanine(in) = L-alanine(out). It carries out the reaction L-serine(in) = L-serine(out). It catalyses the reaction L-leucine(in) = L-leucine(out). Its function is as follows. Facilitates bidirectional transport of amino acids. May act as a glutamate sensor that regulates glutamate-glutamine cycle and mTOR signaling in the brain. The transport mechanism remains to be elucidated. This chain is Solute carrier family 38 member 10, found in Mus musculus (Mouse).